Here is a 121-residue protein sequence, read N- to C-terminus: Large ribosomal subunit protein uL14 (121 aa).

Belongs to the universal ribosomal protein uL14 family. As to quaternary structure, part of the 50S ribosomal subunit. Forms a cluster with proteins L3 and L19. In the 70S ribosome, L14 and L19 interact and together make contacts with the 16S rRNA in bridges B5 and B8.

Its function is as follows. Binds to 23S rRNA. Forms part of two intersubunit bridges in the 70S ribosome. This chain is Large ribosomal subunit protein uL14, found in Synechococcus sp. (strain CC9902).